The primary structure comprises 58 residues: Large ribosomal subunit protein uL30 (58 aa).

The protein belongs to the universal ribosomal protein uL30 family. In terms of assembly, part of the 50S ribosomal subunit.

In Wigglesworthia glossinidia brevipalpis, this protein is Large ribosomal subunit protein uL30.